We begin with the raw amino-acid sequence, 448 residues long: Probable glycine dehydrogenase (decarboxylating) subunit 1 (448 aa).

This sequence belongs to the GcvP family. N-terminal subunit subfamily. The glycine cleavage system is composed of four proteins: P, T, L and H. In this organism, the P 'protein' is a heterodimer of two subunits.

It carries out the reaction N(6)-[(R)-lipoyl]-L-lysyl-[glycine-cleavage complex H protein] + glycine + H(+) = N(6)-[(R)-S(8)-aminomethyldihydrolipoyl]-L-lysyl-[glycine-cleavage complex H protein] + CO2. Functionally, the glycine cleavage system catalyzes the degradation of glycine. The P protein binds the alpha-amino group of glycine through its pyridoxal phosphate cofactor; CO(2) is released and the remaining methylamine moiety is then transferred to the lipoamide cofactor of the H protein. The sequence is that of Probable glycine dehydrogenase (decarboxylating) subunit 1 from Exiguobacterium sibiricum (strain DSM 17290 / CCUG 55495 / CIP 109462 / JCM 13490 / 255-15).